The sequence spans 140 residues: Nucleoside triphosphatase NudI (140 aa).

The region spanning 1–140 is the Nudix hydrolase domain; that stretch reads MRHRTIVCPL…RVTLSLKGLL (140 aa). The short motif at 38-58 is the Nudix box element; that stretch reads GVEPGERIEEALRREIREELG.

Belongs to the Nudix hydrolase family. NudI subfamily. Monomer. Requires Mg(2+) as cofactor.

The catalysed reaction is a ribonucleoside 5'-triphosphate + H2O = a ribonucleoside 5'-phosphate + diphosphate + H(+). It carries out the reaction a 2'-deoxyribonucleoside 5'-triphosphate + H2O = a 2'-deoxyribonucleoside 5'-phosphate + diphosphate + H(+). It catalyses the reaction dUTP + H2O = dUMP + diphosphate + H(+). The enzyme catalyses dTTP + H2O = dTMP + diphosphate + H(+). The catalysed reaction is dCTP + H2O = dCMP + diphosphate + H(+). Functionally, catalyzes the hydrolysis of nucleoside triphosphates, with a preference for pyrimidine deoxynucleoside triphosphates (dUTP, dTTP and dCTP). This chain is Nucleoside triphosphatase NudI, found in Klebsiella pneumoniae subsp. pneumoniae (strain ATCC 700721 / MGH 78578).